The chain runs to 1405 residues: ATP-dependent helicase/nuclease subunit A (1405 aa).

Positions 7 to 482 (REWTPDQLAA…ILLKANFRSR (476 aa)) constitute a UvrD-like helicase ATP-binding domain. 28-35 (AAAGAGKT) contributes to the ATP binding site. Positions 551-914 (PEAVGAGKGG…RVMSIHRAKG (364 aa)) constitute a UvrD-like helicase C-terminal domain. Disordered regions lie at residues 778 to 797 (QEPW…KAVP) and 1132 to 1165 (AGKT…QDET). Residues 787-796 (GPGAAAGKAV) are compositionally biased toward low complexity.

This sequence belongs to the helicase family. AddA subfamily. As to quaternary structure, heterodimer of AddA and AddB/RexB. Requires Mg(2+) as cofactor.

It carries out the reaction Couples ATP hydrolysis with the unwinding of duplex DNA by translocating in the 3'-5' direction.. The catalysed reaction is ATP + H2O = ADP + phosphate + H(+). In terms of biological role, the heterodimer acts as both an ATP-dependent DNA helicase and an ATP-dependent, dual-direction single-stranded exonuclease. Recognizes the chi site generating a DNA molecule suitable for the initiation of homologous recombination. The AddA nuclease domain is required for chi fragment generation; this subunit has the helicase and 3' -&gt; 5' nuclease activities. The chain is ATP-dependent helicase/nuclease subunit A from Moorella thermoacetica (strain ATCC 39073 / JCM 9320).